The sequence spans 92 residues: Small ribosomal subunit protein uS19c (92 aa).

Belongs to the universal ribosomal protein uS19 family.

It is found in the plastid. Its subcellular location is the chloroplast. Its function is as follows. Protein S19 forms a complex with S13 that binds strongly to the 16S ribosomal RNA. The protein is Small ribosomal subunit protein uS19c of Chaetosphaeridium globosum (Charophycean green alga).